A 192-amino-acid chain; its full sequence is Succinate dehydrogenase cytochrome b560 subunit, mitochondrial (192 aa).

The transit peptide at 1 to 27 (MFGRTLNTFTSRNAPLVRNFDKFIVNN) directs the protein to the mitochondrion. The Mitochondrial matrix portion of the chain corresponds to 48 to 83 (YSTQAKKPFTITEKRIDELKTPYQPTSPHLTIYKFP). Residues 84–113 (LPAVMSIMHRATGICLALGITGLAGVTLFA) traverse the membrane as a helical segment. The Mitochondrial intermembrane portion of the chain corresponds to 114–131 (PHDAIHYIQLLHTQYPAL). Residues 132–156 (VYPAKFAVALPLTYHFCTGVRHIIW) form a helical membrane-spanning segment. Residue His-146 participates in heme b binding. At 157–164 (DETVKGLS) the chain is on the mitochondrial matrix side. Residues 165–186 (ISQIESSGKVLLAVVAVLSTIF) form a helical membrane-spanning segment. Over 187–189 (TFV) the chain is Mitochondrial intermembrane.

The protein belongs to the cytochrome b560 family. In terms of assembly, component of complex II composed of four subunits: the flavoprotein (FP) sdha, iron-sulfur protein (IP) sdhb, and a cytochrome b560 composed of sdhc and sdhd. It depends on heme b as a cofactor.

It localises to the mitochondrion inner membrane. The protein operates within carbohydrate metabolism; tricarboxylic acid cycle. Membrane-anchoring subunit of succinate dehydrogenase (SDH) that is involved in complex II of the mitochondrial electron transport chain and is responsible for transferring electrons from succinate to ubiquinone (coenzyme Q). The chain is Succinate dehydrogenase cytochrome b560 subunit, mitochondrial (sdhC) from Dictyostelium discoideum (Social amoeba).